Consider the following 361-residue polypeptide: MGNIHIQTKSKEYDVYVGKESLSHLTTIVQNMKPSVSNIMIISDEAVASLHLQMVVDALQIEKKVFSFVVPSGEKEKSFENFYAAHTSALENKLDRNSLIIALGGGMIGDLAGFVAASFMRGIRFVQVPTTLLAHDSAVGGKVAINHPLGKNMIGAFHQPEAVVYHTPFLQSLPEKEWRSGYAEVIKHALIGDVKLYHWLKEEVQTLADLRDEKLIHILTKAIPVKANIVAQDETEKGVRAHLNFGHTLGHALEKELGYGNITHGDGVAVGMLFAIFLSEQVYKVNLAYEEMKQWFLKYGYPKMPSDLNVERLVGLMKQDKKANAGAIHMVLMQEYGVVNVVSIPDETVHIALEAFQKDMV.

Residues 72-77 (SGEKEK), 130-131 (TT), Lys142, and Lys151 contribute to the NAD(+) site. 3 residues coordinate Zn(2+): Glu184, His247, and His264.

Belongs to the sugar phosphate cyclases superfamily. Dehydroquinate synthase family. It depends on Co(2+) as a cofactor. The cofactor is Zn(2+). NAD(+) serves as cofactor.

The protein resides in the cytoplasm. The enzyme catalyses 7-phospho-2-dehydro-3-deoxy-D-arabino-heptonate = 3-dehydroquinate + phosphate. The protein operates within metabolic intermediate biosynthesis; chorismate biosynthesis; chorismate from D-erythrose 4-phosphate and phosphoenolpyruvate: step 2/7. Its function is as follows. Catalyzes the conversion of 3-deoxy-D-arabino-heptulosonate 7-phosphate (DAHP) to dehydroquinate (DHQ). The polypeptide is 3-dehydroquinate synthase (Bacillus cereus (strain ATCC 10987 / NRS 248)).